The following is a 167-amino-acid chain: Small ribosomal subunit protein uS5 (167 aa).

The S5 DRBM domain occupies 11-74; sequence LQEKLIAVNR…EKARRAMINV (64 aa).

The protein belongs to the universal ribosomal protein uS5 family. In terms of assembly, part of the 30S ribosomal subunit. Contacts proteins S4 and S8.

With S4 and S12 plays an important role in translational accuracy. Its function is as follows. Located at the back of the 30S subunit body where it stabilizes the conformation of the head with respect to the body. This chain is Small ribosomal subunit protein uS5, found in Yersinia pseudotuberculosis serotype O:1b (strain IP 31758).